A 1976-amino-acid chain; its full sequence is Myosin-10 (1976 aa).

At R18 the chain carries Omega-N-methylarginine. A Myosin N-terminal SH3-like domain is found at 31–81 (TAKKLVWIPSERHGFEAASIKEERGDEVMVELAENGKKAMVNKDDIQKMNP). Positions 85–783 (SKVEDMAELT…VLAHLEEERD (699 aa)) constitute a Myosin motor domain. 178–185 (GESGAGKT) lines the ATP pocket. K442 is modified (N6-acetyllysine). Positions 661–683 (LTKLMATLRNTNPNFVRCIIPNH) are actin-binding. Residues 786–815 (ITDIIIFFQAVCRGYLARKAFAKKQQQLSA) enclose the IQ domain. A coiled-coil region spans residues 845 to 1976 (LQVTRQEEEL…VNDTQPPQSE (1132 aa)). The disordered stretch occupies residues 1125-1175 (EDFESEKASRNKAEKQKRDLSEELEALKTELEDTLDTTAAQQELRTKREQE). Residues 1129–1155 (SEKASRNKAEKQKRDLSEELEALKTEL) are compositionally biased toward basic and acidic residues. The residue at position 1145 (S1145) is a Phosphoserine. K1241, K1301, and K1645 each carry N6-acetyllysine. Disordered regions lie at residues 1697–1718 (ASSERARRHAEQERDELADEIA) and 1874–1976 (KANA…PQSE). Residues 1698–1708 (SSERARRHAEQ) show a composition bias toward basic and acidic residues. R1930 carries the post-translational modification Omega-N-methylarginine. 4 positions are modified to phosphoserine: S1935, S1937, S1938, and S1939. R1940 carries the omega-N-methylarginine modification. Phosphoserine is present on residues S1952 and S1956. At T1960 the chain carries Phosphothreonine. The span at 1967 to 1976 (VNDTQPPQSE) shows a compositional bias: polar residues. S1975 carries the post-translational modification Phosphoserine.

This sequence belongs to the TRAFAC class myosin-kinesin ATPase superfamily. Myosin family. In terms of assembly, myosin is a hexameric protein that consists of 2 heavy chain subunits (MHC), 2 alkali light chain subunits (MLC) and 2 regulatory light chain subunits (MLC-2). Interacts with PLEKHG6. Interacts with ECPAS. Interacts with LARP6. Interacts with MCC. Interacts with KIF26B. Interacts with CFAP95. Phosphorylated by ABL2. In newborn kidney, expressed in the mesenchyme and ureteric buds.

The protein localises to the cell projection. Its subcellular location is the lamellipodium. Functionally, involved with LARP6 in the stabilization of type I collagen mRNAs for CO1A1 and CO1A2. During cell spreading, plays an important role in cytoskeleton reorganization, focal contacts formation (in the central part but not the margins of spreading cells), and lamellipodial extension; this function is mechanically antagonized by MYH9. Cellular myosin that appears to play a role in cytokinesis, cell shape, and specialized functions such as secretion and capping. The sequence is that of Myosin-10 (Myh10) from Mus musculus (Mouse).